Here is a 447-residue protein sequence, read N- to C-terminus: Phosphoglucosamine mutase (447 aa).

Ser100 functions as the Phosphoserine intermediate in the catalytic mechanism. Mg(2+) contacts are provided by Ser100, Asp240, Asp242, and Asp244. Residue Ser100 is modified to Phosphoserine.

The protein belongs to the phosphohexose mutase family. Mg(2+) serves as cofactor. Post-translationally, activated by phosphorylation.

It catalyses the reaction alpha-D-glucosamine 1-phosphate = D-glucosamine 6-phosphate. Its function is as follows. Catalyzes the conversion of glucosamine-6-phosphate to glucosamine-1-phosphate. This chain is Phosphoglucosamine mutase, found in Clostridium botulinum (strain Alaska E43 / Type E3).